The primary structure comprises 379 residues: Chaperone protein DnaJ (379 aa).

In terms of domain architecture, J spans 5–70 (DYYEILGLDK…QKKAQYDQFG (66 aa)). The CR-type zinc-finger motif lies at 135–217 (GVEKEISVTR…CRGKGIVRKH (83 aa)). Positions 148, 151, 165, 168, 191, 194, 205, and 208 each coordinate Zn(2+). 4 CXXCXGXG motif repeats span residues 148-155 (CETCNGTG), 165-172 (CDKCNGTG), 191-198 (CDKCGGRG), and 205-212 (CEECRGKG).

This sequence belongs to the DnaJ family. Homodimer. Requires Zn(2+) as cofactor.

The protein resides in the cytoplasm. Its function is as follows. Participates actively in the response to hyperosmotic and heat shock by preventing the aggregation of stress-denatured proteins and by disaggregating proteins, also in an autonomous, DnaK-independent fashion. Unfolded proteins bind initially to DnaJ; upon interaction with the DnaJ-bound protein, DnaK hydrolyzes its bound ATP, resulting in the formation of a stable complex. GrpE releases ADP from DnaK; ATP binding to DnaK triggers the release of the substrate protein, thus completing the reaction cycle. Several rounds of ATP-dependent interactions between DnaJ, DnaK and GrpE are required for fully efficient folding. Also involved, together with DnaK and GrpE, in the DNA replication of plasmids through activation of initiation proteins. This chain is Chaperone protein DnaJ, found in Clostridium kluyveri (strain ATCC 8527 / DSM 555 / NBRC 12016 / NCIMB 10680 / K1).